Reading from the N-terminus, the 458-residue chain is ATP synthase subunit beta (458 aa).

Gly148–Thr155 is an ATP binding site.

This sequence belongs to the ATPase alpha/beta chains family. As to quaternary structure, F-type ATPases have 2 components, CF(1) - the catalytic core - and CF(0) - the membrane proton channel. CF(1) has five subunits: alpha(3), beta(3), gamma(1), delta(1), epsilon(1). CF(0) has three main subunits: a(1), b(2) and c(9-12). The alpha and beta chains form an alternating ring which encloses part of the gamma chain. CF(1) is attached to CF(0) by a central stalk formed by the gamma and epsilon chains, while a peripheral stalk is formed by the delta and b chains.

It is found in the cell inner membrane. It catalyses the reaction ATP + H2O + 4 H(+)(in) = ADP + phosphate + 5 H(+)(out). Functionally, produces ATP from ADP in the presence of a proton gradient across the membrane. The catalytic sites are hosted primarily by the beta subunits. The protein is ATP synthase subunit beta of Stutzerimonas stutzeri (strain A1501) (Pseudomonas stutzeri).